A 339-amino-acid polypeptide reads, in one-letter code: GTP 3',8-cyclase (339 aa).

The Radical SAM core domain occupies 13-249 (RYGRPLRDLR…GEVAQRHAFA (237 aa)). R22 provides a ligand contact to GTP. 2 residues coordinate [4Fe-4S] cluster: C29 and C33. Y35 lines the S-adenosyl-L-methionine pocket. Residue C36 coordinates [4Fe-4S] cluster. R75 contributes to the GTP binding site. Position 79 (G79) interacts with S-adenosyl-L-methionine. Residue T106 participates in GTP binding. S130 contributes to the S-adenosyl-L-methionine binding site. K168 lines the GTP pocket. An S-adenosyl-L-methionine-binding site is contributed by M202. [4Fe-4S] cluster contacts are provided by C266 and C269. 271–273 (RAR) is a binding site for GTP. C283 contributes to the [4Fe-4S] cluster binding site.

This sequence belongs to the radical SAM superfamily. MoaA family. As to quaternary structure, monomer and homodimer. It depends on [4Fe-4S] cluster as a cofactor.

It carries out the reaction GTP + AH2 + S-adenosyl-L-methionine = (8S)-3',8-cyclo-7,8-dihydroguanosine 5'-triphosphate + 5'-deoxyadenosine + L-methionine + A + H(+). Its pathway is cofactor biosynthesis; molybdopterin biosynthesis. Functionally, catalyzes the cyclization of GTP to (8S)-3',8-cyclo-7,8-dihydroguanosine 5'-triphosphate. This Xanthomonas campestris pv. campestris (strain 8004) protein is GTP 3',8-cyclase.